A 533-amino-acid chain; its full sequence is Retinoid isomerohydrolase (533 aa).

Serine 2 bears the N-acetylserine mark. Phosphothreonine is present on residues threonine 101 and threonine 105. Residue cysteine 112 is the site of S-palmitoyl cysteine; in membrane form attachment. Position 113 is an N6-acetyllysine (lysine 113). Serine 117 is subject to Phosphoserine. A Fe cation-binding site is contributed by histidine 180. Cysteine 231 carries S-palmitoyl cysteine; in membrane form lipidation. Residues histidine 241 and histidine 313 each coordinate Fe cation. Residues cysteine 329 and cysteine 330 are each lipidated (S-palmitoyl cysteine; in membrane form). Histidine 527 contributes to the Fe cation binding site.

Belongs to the carotenoid oxygenase family. Interacts with MYO7A; this mediates light-dependent intracellular transport of RPE65. Requires Fe(2+) as cofactor. Post-translationally, palmitoylation by LRAT regulates ligand binding specificity; the palmitoylated form (membrane form) specifically binds all-trans-retinyl-palmitate, while the soluble unpalmitoylated form binds all-trans-retinol (vitamin A). As to expression, retinal pigment epithelium specific.

It is found in the cytoplasm. Its subcellular location is the cell membrane. The protein localises to the microsome membrane. It catalyses the reaction an all-trans-retinyl ester + H2O = 11-cis-retinol + a fatty acid + H(+). The catalysed reaction is lutein = (3R,3'S)-zeaxanthin. It carries out the reaction all-trans-retinyl hexadecanoate + H2O = 11-cis-retinol + hexadecanoate + H(+). Critical isomerohydrolase in the retinoid cycle involved in regeneration of 11-cis-retinal, the chromophore of rod and cone opsins. Catalyzes the cleavage and isomerization of all-trans-retinyl fatty acid esters to 11-cis-retinol which is further oxidized by 11-cis retinol dehydrogenase to 11-cis-retinal for use as visual chromophore. Essential for the production of 11-cis retinal for both rod and cone photoreceptors. Also capable of catalyzing the isomerization of lutein to meso-zeaxanthin an eye-specific carotenoid. The soluble form binds vitamin A (all-trans-retinol), making it available for LRAT processing to all-trans-retinyl ester. The membrane form, palmitoylated by LRAT, binds all-trans-retinyl esters, making them available for IMH (isomerohydrolase) processing to all-cis-retinol. The soluble form is regenerated by transferring its palmitoyl groups onto 11-cis-retinol, a reaction catalyzed by LRAT. This Mus musculus (Mouse) protein is Retinoid isomerohydrolase (Rpe65).